Consider the following 458-residue polypeptide: MISPLSVIILAAGKGTRMQSAKPKVLQTLAGKSLLGHVLDTCHQLTVDDTIIVHGFGGEQVQAHIAEQYAHLPITWVAQTEQLGTGHAVKVTLSDLPKEGQSLILYGDVPLVSCQTLATLQAANIYGVSMLTLTVDNPFGLGRIKRDKAGNIEAIIEQKDASSDEQQIQEINSGIYCVDNALLHKFLPKLSNDNAQQEYYLTDIVKMAVADGITIAAIEPEHTFEIEGVNNRQQLASLERTWQGKLVADLQEAGVQFADPTRVDIRGTLSVGQDVFVDVGVVFEGDCTLGDNVYIEAGCVIKNSQIGNACHIKPYCVIDEATVGAGVDIGPFAHLRPETVLSDNSKVGNFVEIKKSTIGHGSKVNHLSYIGDATVGTGVNVGAGVITCNYDGVNKSQTIIEDHAFIGSNSSLVAPVTIGDTATIAAGSVITKDVDASALAFGRARQTQKDNFQRPTKK.

The pyrophosphorylase stretch occupies residues 1-232 (MISPLSVIIL…TFEIEGVNNR (232 aa)). Residues 10 to 13 (LAAG), Lys24, Gln79, 84 to 85 (GT), 106 to 108 (YGD), Gly142, Glu157, Asn172, and Asn230 each bind UDP-N-acetyl-alpha-D-glucosamine. A Mg(2+)-binding site is contributed by Asp108. Asn230 serves as a coordination point for Mg(2+). The segment at 233-253 (QQLASLERTWQGKLVADLQEA) is linker. Positions 254–458 (GVQFADPTRV…KDNFQRPTKK (205 aa)) are N-acetyltransferase. Residues Arg336 and Lys354 each contribute to the UDP-N-acetyl-alpha-D-glucosamine site. His366 (proton acceptor) is an active-site residue. Positions 369 and 380 each coordinate UDP-N-acetyl-alpha-D-glucosamine. Acetyl-CoA-binding positions include Ala383, 389–390 (NY), Ser408, Ala426, and Arg443.

It in the N-terminal section; belongs to the N-acetylglucosamine-1-phosphate uridyltransferase family. The protein in the C-terminal section; belongs to the transferase hexapeptide repeat family. As to quaternary structure, homotrimer. Mg(2+) serves as cofactor.

It localises to the cytoplasm. The catalysed reaction is alpha-D-glucosamine 1-phosphate + acetyl-CoA = N-acetyl-alpha-D-glucosamine 1-phosphate + CoA + H(+). It catalyses the reaction N-acetyl-alpha-D-glucosamine 1-phosphate + UTP + H(+) = UDP-N-acetyl-alpha-D-glucosamine + diphosphate. It participates in nucleotide-sugar biosynthesis; UDP-N-acetyl-alpha-D-glucosamine biosynthesis; N-acetyl-alpha-D-glucosamine 1-phosphate from alpha-D-glucosamine 6-phosphate (route II): step 2/2. Its pathway is nucleotide-sugar biosynthesis; UDP-N-acetyl-alpha-D-glucosamine biosynthesis; UDP-N-acetyl-alpha-D-glucosamine from N-acetyl-alpha-D-glucosamine 1-phosphate: step 1/1. The protein operates within bacterial outer membrane biogenesis; LPS lipid A biosynthesis. Catalyzes the last two sequential reactions in the de novo biosynthetic pathway for UDP-N-acetylglucosamine (UDP-GlcNAc). The C-terminal domain catalyzes the transfer of acetyl group from acetyl coenzyme A to glucosamine-1-phosphate (GlcN-1-P) to produce N-acetylglucosamine-1-phosphate (GlcNAc-1-P), which is converted into UDP-GlcNAc by the transfer of uridine 5-monophosphate (from uridine 5-triphosphate), a reaction catalyzed by the N-terminal domain. This is Bifunctional protein GlmU from Psychrobacter arcticus (strain DSM 17307 / VKM B-2377 / 273-4).